The chain runs to 1563 residues: Rab-3-interacting molecule unc-10 (1563 aa).

Residues 7–133 (MPDLSHLSAE…AKTGKWFQPE (127 aa)) form the RabBD domain. Residues 25–35 (FKRQKDEEAKE) are compositionally biased toward basic and acidic residues. Residues 25–50 (FKRQKDEEAKETQISQKASEELSELD) form a disordered region. The segment at 66-121 (TQDDAICQICQKTKFADGIGHKCFYCQLRSCARCGGRAQSKNKAIWACSLCQKRQQ) adopts an FYVE-type zinc-finger fold. Residues Cys-72, Cys-75, Cys-88, Cys-91, Cys-96, Cys-99, Cys-113, and Cys-116 each contribute to the Zn(2+) site. Disordered stretches follow at residues 128–466 (KWFQ…DHLN) and 582–605 (GGLD…RNDH). Residues 172-182 (NTPNYQNNQQP) show a composition bias toward polar residues. Composition is skewed to low complexity over residues 190-284 (NHNQ…RNQT) and 300-316 (QTPQ…VGAA). A compositionally biased stretch (basic and acidic residues) spans 326–345 (QEQHHQQMNEQRTDNNRMRE). Polar residues-rich tracts occupy residues 356–367 (RQPSLEQTTPMN) and 379–389 (QRPTFYTGNSE). Residues 395 to 415 (FDGQMQQGSQQNNQNQNQNNR) are compositionally biased toward low complexity. A PDZ domain is found at 643–733 (HMILHRTENS…DTSVELIVSR (91 aa)). One can recognise a C2 1 domain in the interval 840–962 (IFGRIEVSFV…PLDGEHSLMC (123 aa)). Disordered regions lie at residues 1054–1163 (ENDI…YLGD), 1177–1311 (GQMT…GGSA), and 1346–1373 (VGIP…KEST). A compositionally biased stretch (polar residues) spans 1086–1097 (WTQNHQRQSGYT). The segment covering 1112 to 1121 (YNRRQQRRPR) has biased composition (basic residues). Residues 1129–1154 (MEREDMYDPTRKHRDDNEYSMRESVR) are compositionally biased toward basic and acidic residues. A compositionally biased stretch (low complexity) spans 1181-1230 (PKQHNQQHQPHPLSQAHQQQQTAGVQPQHHQGFQQQQHPQQPNQQMQQMQ). The segment covering 1242–1255 (GSETLSVHSTNSMP) has biased composition (polar residues). Over residues 1256–1277 (TTMTTVNRRNMNANNTSNDNTS) the composition is skewed to low complexity. Over residues 1278 to 1288 (FAETPTANTNR) the composition is skewed to polar residues. Positions 1297 to 1311 (NSLASSSSVAGGGSA) are enriched in low complexity. Positions 1417 to 1536 (VLGEIQIALM…LGSQPLIGWY (120 aa)) constitute a C2 2 domain.

In terms of tissue distribution, restricted to discrete puncta in synapse-rich regions of the nervous system including the nerve ring, the ventral nerve cord and the dorsal nerve cord. Localized expression was found in the head.

The protein resides in the synapse. Functionally, regulates the efficiency of a post-docking step of the release pathway. Acts after vesicle docking likely via regulating priming. May regulate the conformational changes in syntaxin. Binding of vesicles via rab-3[GTP] to Rim may signal the presence of a docked synaptic vesicle. Rim may then signal to unc-13 to change the conformation of syntaxin from the closed to the open state. Syntaxin could then engage synaptobrevin on the docked vesicle to form SNARE complexes and to prime the vesicle for release. Not required for the development or the structural organization of synapses. May play a role in regulating entry into the dauer state. This chain is Rab-3-interacting molecule unc-10, found in Caenorhabditis elegans.